The following is a 540-amino-acid chain: MQAVKRSRRHVEEEPTMVEPKTKYDRQLRIWGEVGQAALEEASICLLNCGPTGSEALKNLVLGGVGSITVVDGSKVQFGDLGNNFMVDAKSVGQSKAKSVCAFLQELNDSVNAKFIEENPDTLITTNPSFFSQFTLVIATQLVEDSMLKLDRICRDANVKLVLVRSYGLAGFVRISVKEHPIIDSKPDHFLDDLRLNNPWPELKSFVETIDLNVSEPAAAHKHIPYVVILVKMAEEWAQSHSGNLPSTREEKKEFKDLVKSKMVSTDEDNYKEAIEAAFKVFAPRGISSEVQKLINDSCAEVNSNSSAFWVMVAALKEFVLNEGGGEAPLEGSIPDMTSSTEHYINLQKIYLAKAEADFLVIEERVKNILKKIGRDPSSIPKPTIKSFCKNARKLKLCRYRMVEDEFRNPSVTEIQKYLADEDYSGAMGFYILLRAADRFAANYNKFPGQFDGGMDEDISRLKTTALSLLTDLGCNGSVLPDDLIHEMCRFGASEIHVVSAFVGGIASQEVIKLVTKQFVPMLGTYIFNGIDHKSQLLKL.

It belongs to the ubiquitin-activating E1 family. ULA1 subfamily. As to quaternary structure, heterodimer of ECR1 and AXR1. The complex binds to RUB1/NEDD8 and RCE1. As to expression, expressed in shoot, root and floral meristems, in vascular tissues of cotyledons and mature leaves, and in the stele of the root. Expressed at higher levels on the lower side of an emerging root during germination and at higher levels on the underside of the apical hook.

It is found in the nucleus. The protein operates within protein modification; protein neddylation. In terms of biological role, regulatory subunit of the dimeric ECR1-AXR1 E1 enzyme. E1 activates RUB1/NEDD8 by first adenylating its C-terminal glycine residue with ATP, thereafter linking this residue to the side chain of the catalytic cysteine, yielding a RUB1-ECR1 thioester and free AMP. E1 finally transfers RUB1 to the catalytic cysteine of RCE1. Plays an important role in auxin response. Regulates the chromosomal localization of meiotic recombination by crossovers (COs) and subsequent synapsis, probably through the activation of a CRL4 complex. Required for E3-mediated protein degradation in response to auxin, jasmonic acid and cold stress. Required for the COP1-COP10-CSN-mediated repression of photomorphogenesis in the dark. May function redundantly with AXL1 in the RUB conjugating pathway. Seems not to be functionally equivalent to AXL1 in vivo. This is NEDD8-activating enzyme E1 regulatory subunit AXR1 from Arabidopsis thaliana (Mouse-ear cress).